A 295-amino-acid chain; its full sequence is Probable endonuclease 4 (295 aa).

Zn(2+) contacts are provided by His-78, His-118, Glu-154, Asp-188, His-191, His-225, Asp-238, His-240, and Glu-270.

This sequence belongs to the AP endonuclease 2 family. Requires Zn(2+) as cofactor.

The catalysed reaction is Endonucleolytic cleavage to 5'-phosphooligonucleotide end-products.. Endonuclease IV plays a role in DNA repair. It cleaves phosphodiester bonds at apurinic or apyrimidinic (AP) sites, generating a 3'-hydroxyl group and a 5'-terminal sugar phosphate. The protein is Probable endonuclease 4 of Vibrio parahaemolyticus serotype O3:K6 (strain RIMD 2210633).